Consider the following 460-residue polypeptide: UDP-N-acetylmuramate--L-alanine ligase (460 aa).

118-124 (GAHGKTT) lines the ATP pocket.

Belongs to the MurCDEF family.

It is found in the cytoplasm. The enzyme catalyses UDP-N-acetyl-alpha-D-muramate + L-alanine + ATP = UDP-N-acetyl-alpha-D-muramoyl-L-alanine + ADP + phosphate + H(+). The protein operates within cell wall biogenesis; peptidoglycan biosynthesis. Its function is as follows. Cell wall formation. This chain is UDP-N-acetylmuramate--L-alanine ligase, found in Clostridium botulinum (strain Alaska E43 / Type E3).